We begin with the raw amino-acid sequence, 231 residues long: MNDQKIIVALDYDNQADALAFVDRIDPASCRLKVGKEMFTLFGPEFVRELHKRGFSVFLDLKFHDIPNTCSKAVRAAAEMGVWMVNVHASGGERMMTASREILEPYGKDRPLLIGVTVLTSMEQSDLAGIGLDLEPQQQVMRLASLTKNSGLDGVVCSAQEASLLKGALGQEFKLVTPGIRPVGADVGDQKRIMTPSKAIESGSDYLVIGRPITQAIDPAAVLAEINGTLA.

Residues Asp-11, Lys-33, 60–69 (DLKFHDIPNT), Thr-120, Arg-181, Gln-190, Gly-210, and Arg-211 contribute to the substrate site. Catalysis depends on Lys-62, which acts as the Proton donor.

Belongs to the OMP decarboxylase family. Type 1 subfamily. In terms of assembly, homodimer.

The catalysed reaction is orotidine 5'-phosphate + H(+) = UMP + CO2. The protein operates within pyrimidine metabolism; UMP biosynthesis via de novo pathway; UMP from orotate: step 2/2. Functionally, catalyzes the decarboxylation of orotidine 5'-monophosphate (OMP) to uridine 5'-monophosphate (UMP). The chain is Orotidine 5'-phosphate decarboxylase from Vibrio atlanticus (strain LGP32) (Vibrio splendidus (strain Mel32)).